The following is a 245-amino-acid chain: Homeobox protein goosecoid (245 aa).

The segment at residues 150–209 (KRRHRTIFTDEQLEALENLFQETKYPDVGTREQLARKVHLREEKVEVWFKNRRAKWRRQK) is a DNA-binding region (homeobox). Residues 203–245 (AKWRRQKRSSSEESENAQKWNKASKTSPEKRQEDGKSDLDSDS) are disordered. The span at 219–228 (AQKWNKASKT) shows a compositional bias: polar residues. Basic and acidic residues predominate over residues 229–245 (SPEKRQEDGKSDLDSDS).

This sequence belongs to the paired homeobox family. Bicoid subfamily.

It is found in the nucleus. In terms of biological role, involved in the development of the organizer region in the gastrula (Hensen node in chicken). This Gallus gallus (Chicken) protein is Homeobox protein goosecoid (GSC).